Reading from the N-terminus, the 197-residue chain is Peptide deformylase (197 aa).

C106 and H148 together coordinate Fe cation. E149 is a catalytic residue. Fe cation is bound at residue H152.

The protein belongs to the polypeptide deformylase family. Fe(2+) serves as cofactor.

The enzyme catalyses N-terminal N-formyl-L-methionyl-[peptide] + H2O = N-terminal L-methionyl-[peptide] + formate. Its function is as follows. Removes the formyl group from the N-terminal Met of newly synthesized proteins. Requires at least a dipeptide for an efficient rate of reaction. N-terminal L-methionine is a prerequisite for activity but the enzyme has broad specificity at other positions. This is Peptide deformylase from Mycolicibacterium vanbaalenii (strain DSM 7251 / JCM 13017 / BCRC 16820 / KCTC 9966 / NRRL B-24157 / PYR-1) (Mycobacterium vanbaalenii).